The sequence spans 324 residues: NADH-ubiquinone oxidoreductase chain 1 (324 aa).

8 consecutive transmembrane segments (helical) span residues 5-25 (ILLY…ATAF), 75-95 (FLFL…WMPL), 106-126 (LGLL…LGSG), 146-166 (ISYE…TGGF), 177-197 (TVWL…STLA), 228-248 (LFFL…VILF), 259-279 (QIST…FLWI), and 299-319 (FLPL…ATAS).

Belongs to the complex I subunit 1 family.

It localises to the mitochondrion inner membrane. It carries out the reaction a ubiquinone + NADH + 5 H(+)(in) = a ubiquinol + NAD(+) + 4 H(+)(out). In terms of biological role, core subunit of the mitochondrial membrane respiratory chain NADH dehydrogenase (Complex I) that is believed to belong to the minimal assembly required for catalysis. Complex I functions in the transfer of electrons from NADH to the respiratory chain. The immediate electron acceptor for the enzyme is believed to be ubiquinone. The sequence is that of NADH-ubiquinone oxidoreductase chain 1 (MT-ND1) from Squalus acanthias (Spiny dogfish).